The chain runs to 548 residues: Rhodopsin kinase grk7-b (548 aa).

Ser-33 bears the Phosphoserine; by PKA mark. The RGS domain occupies 53–172 (FEDICEQQPI…QTSLFFDRFV (120 aa)). The Protein kinase domain maps to 187 to 446 (FYEFRTLGKG…NDDPRKHEFF (260 aa)). ATP is bound by residues 193-201 (LGKGGFGEV) and Lys-216. Residue Asp-312 is the Proton acceptor of the active site. The AGC-kinase C-terminal domain occupies 447–512 (KSINFPRLEA…GVVPIAWQQE (66 aa)). The interval 520–548 (DELSDPNRKESAAGLEDEEQQKSKSCTLL) is disordered. Cys-545 is subject to Cysteine methyl ester. A lipid anchor (S-geranylgeranyl cysteine) is attached at Cys-545. The propeptide at 546–548 (TLL) is removed in mature form.

It belongs to the protein kinase superfamily. AGC Ser/Thr protein kinase family. GPRK subfamily. In terms of processing, phosphorylation at Ser-33 is regulated by light and activated by cAMP. As to expression, expressed in the eyes (at protein level). Expressed in the eyes, the pineal gland and in the brain.

Its subcellular location is the membrane. It carries out the reaction L-threonyl-[rhodopsin] + ATP = O-phospho-L-threonyl-[rhodopsin] + ADP + H(+). The catalysed reaction is L-seryl-[rhodopsin] + ATP = O-phospho-L-seryl-[rhodopsin] + ADP + H(+). In terms of biological role, retina-specific kinase involved in the shutoff of the photoresponse and adaptation to changing light conditions via cone opsin phosphorylation, including rhodopsin (RHO). The polypeptide is Rhodopsin kinase grk7-b (grk7b) (Danio rerio (Zebrafish)).